A 341-amino-acid polypeptide reads, in one-letter code: L-threonine 3-dehydrogenase (341 aa).

Residue cysteine 38 coordinates Zn(2+). Residues threonine 40 and histidine 43 each act as charge relay system in the active site. Positions 63, 64, 93, 96, 99, and 107 each coordinate Zn(2+). NAD(+) contacts are provided by residues isoleucine 175, aspartate 195, arginine 200, 262 to 264 (LGI), and 286 to 287 (IY).

This sequence belongs to the zinc-containing alcohol dehydrogenase family. Homotetramer. Zn(2+) serves as cofactor.

The protein localises to the cytoplasm. It carries out the reaction L-threonine + NAD(+) = (2S)-2-amino-3-oxobutanoate + NADH + H(+). It functions in the pathway amino-acid degradation; L-threonine degradation via oxydo-reductase pathway; glycine from L-threonine: step 1/2. Its function is as follows. Catalyzes the NAD(+)-dependent oxidation of L-threonine to 2-amino-3-ketobutyrate. This is L-threonine 3-dehydrogenase from Escherichia coli O139:H28 (strain E24377A / ETEC).